The chain runs to 451 residues: Trigger factor (451 aa).

The PPIase FKBP-type domain occupies 171-256; the sequence is GDRVKVNFKG…ATAIEAPEDK (86 aa).

Belongs to the FKBP-type PPIase family. Tig subfamily.

The protein resides in the cytoplasm. The catalysed reaction is [protein]-peptidylproline (omega=180) = [protein]-peptidylproline (omega=0). In terms of biological role, involved in protein export. Acts as a chaperone by maintaining the newly synthesized protein in an open conformation. Functions as a peptidyl-prolyl cis-trans isomerase. This is Trigger factor from Bradyrhizobium sp. (strain ORS 278).